A 217-amino-acid polypeptide reads, in one-letter code: Large ribosomal subunit protein uL4 (217 aa).

A disordered region spans residues Lys-46–Thr-103.

This sequence belongs to the universal ribosomal protein uL4 family. As to quaternary structure, part of the 50S ribosomal subunit.

Its function is as follows. One of the primary rRNA binding proteins, this protein initially binds near the 5'-end of the 23S rRNA. It is important during the early stages of 50S assembly. It makes multiple contacts with different domains of the 23S rRNA in the assembled 50S subunit and ribosome. In terms of biological role, forms part of the polypeptide exit tunnel. The chain is Large ribosomal subunit protein uL4 from Corynebacterium jeikeium (strain K411).